Consider the following 336-residue polypeptide: Ventral anterior homeobox 1 (336 aa).

Over residues 1–34 (MFGKTDKMDVRCHSDTEAARVSKNAHKESREIKG) the composition is skewed to basic and acidic residues. 2 disordered regions span residues 1–39 (MFGK…EGSL) and 50–69 (AFSA…NSSA). Positions 100-159 (PKRTRTSFTAEQLYRLEMEFQRCQYVVGRERTELARQLNLSETQVKVWFQNRRTKQKKDQ) form a DNA-binding region, homeobox. Residues 236–250 (PGPAGAASQHPPAVG) show a composition bias toward low complexity. Disordered regions lie at residues 236–267 (PGPA…HAGA) and 316–336 (SAFE…KALD). Positions 325-336 (NNKEGAEKKALD) are enriched in basic and acidic residues.

It belongs to the EMX homeobox family.

The protein localises to the nucleus. Its function is as follows. Transcription factor that may function in dorsoventral specification of the forebrain. Required for axon guidance and major tract formation in the developing forebrain. May contribute to the differentiation of the neuroretina, pigmented epithelium and optic stalk. The polypeptide is Ventral anterior homeobox 1 (Vax1) (Rattus norvegicus (Rat)).